Here is a 491-residue protein sequence, read N- to C-terminus: Anthranilate synthase component 1 (491 aa).

L-tryptophan is bound by residues Ser49 and 271–273; that span reads PYL. Chorismate is bound at residue 306–307; sequence GT. Glu333 contributes to the Mg(2+) binding site. Chorismate-binding positions include Tyr421, Arg441, 455–457, and Gly457; that span reads GAG. Residue Glu470 participates in Mg(2+) binding.

Belongs to the anthranilate synthase component I family. Heterotetramer consisting of two non-identical subunits: a beta subunit (TrpG) and a large alpha subunit (TrpE). Mg(2+) serves as cofactor.

The catalysed reaction is chorismate + L-glutamine = anthranilate + pyruvate + L-glutamate + H(+). It participates in amino-acid biosynthesis; L-tryptophan biosynthesis; L-tryptophan from chorismate: step 1/5. Feedback inhibited by tryptophan. In terms of biological role, part of a heterotetrameric complex that catalyzes the two-step biosynthesis of anthranilate, an intermediate in the biosynthesis of L-tryptophan. In the first step, the glutamine-binding beta subunit (TrpG) of anthranilate synthase (AS) provides the glutamine amidotransferase activity which generates ammonia as a substrate that, along with chorismate, is used in the second step, catalyzed by the large alpha subunit of AS (TrpE) to produce anthranilate. In the absence of TrpG, TrpE can synthesize anthranilate directly from chorismate and high concentrations of ammonia. In Neisseria meningitidis serogroup C / serotype 2a (strain ATCC 700532 / DSM 15464 / FAM18), this protein is Anthranilate synthase component 1 (trpE).